Reading from the N-terminus, the 126-residue chain is NADP-reducing hydrogenase subunit HndB (126 aa).

Heterotetramer composed of HndA, HndB, HndC and HndD subunits. HndA and HndB could form a heterodimeric intermediate in the electron transfer between the active site of hydrogenase subunit HndD and the NADP reduction site of the reducing subunit HndC.

It carries out the reaction H2 + NADP(+) = NADPH + H(+). Its activity is regulated as follows. Inhibited by oxygen. Functionally, catalyzes the reduction of NADP in the presence of molecular H2 to yield NADPH. The protein is NADP-reducing hydrogenase subunit HndB (hndB) of Solidesulfovibrio fructosivorans (Desulfovibrio fructosivorans).